We begin with the raw amino-acid sequence, 273 residues long: Putative phosphoenolpyruvate synthase regulatory protein (273 aa).

154-161 contacts ADP; that stretch reads GVSRSGKT.

It belongs to the pyruvate, phosphate/water dikinase regulatory protein family. PSRP subfamily.

It catalyses the reaction [pyruvate, water dikinase] + ADP = [pyruvate, water dikinase]-phosphate + AMP + H(+). The enzyme catalyses [pyruvate, water dikinase]-phosphate + phosphate + H(+) = [pyruvate, water dikinase] + diphosphate. Bifunctional serine/threonine kinase and phosphorylase involved in the regulation of the phosphoenolpyruvate synthase (PEPS) by catalyzing its phosphorylation/dephosphorylation. The sequence is that of Putative phosphoenolpyruvate synthase regulatory protein from Neisseria gonorrhoeae (strain ATCC 700825 / FA 1090).